The primary structure comprises 313 residues: Probable myosin light chain kinase DDB_G0292624 (313 aa).

Positions 6–264 (YELHKEIGKG…AKQALEHPWI (259 aa)) constitute a Protein kinase domain. ATP-binding positions include 12-20 (IGKGAFSVV) and Lys35. Asp125 (proton acceptor) is an active-site residue.

It belongs to the protein kinase superfamily. CAMK Ser/Thr protein kinase family. CaMK subfamily.

It catalyses the reaction L-seryl-[myosin light chain] + ATP = O-phospho-L-seryl-[myosin light chain] + ADP + H(+). The catalysed reaction is L-threonyl-[myosin light chain] + ATP = O-phospho-L-threonyl-[myosin light chain] + ADP + H(+). Its activity is regulated as follows. Does not have a calmodulin-binding domain. Its function is as follows. May phosphorylate a specific serine in the N-terminus of a myosin light chain. This Dictyostelium discoideum (Social amoeba) protein is Probable myosin light chain kinase DDB_G0292624.